The primary structure comprises 391 residues: Autotransporter heptosyltransferase Aah (391 aa).

ADP-D-glycero-beta-D-manno-heptose is bound by residues threonine 101, leucine 102, and glycine 103. Aspartate 104 (proton acceptor) is an active-site residue. Glutamine 218, threonine 220, lysine 224, arginine 251, leucine 275, glycine 296, and glutamate 320 together coordinate ADP-D-glycero-beta-D-manno-heptose. Fe(3+) contacts are provided by cysteine 333, cysteine 336, cysteine 352, and cysteine 364.

The protein belongs to the glycosyltransferase 9 family. Homododecamer composed of 6 homodimers forming a ring. Requires Fe(3+) as cofactor.

The protein resides in the cytoplasm. The catalysed reaction is ADP-D-glycero-beta-D-manno-heptose + L-seryl-[protein] = O-(D-glycero-alpha-D-manno-heptosyl)-L-seryl-[protein] + ADP + H(+). It carries out the reaction ADP-L-glycero-beta-D-manno-heptose + L-seryl-[protein] = O-(L-glycero-alpha-D-manno-heptosyl)-L-seryl-[protein] + ADP + H(+). Functionally, glycosylates autotransporter AIDA-I. Catalyzes the addition of both L, D-heptose and D, D-heptose sugars. Probably by glycosylating AIDA-I, involved in bacteria adhesion to host mammalian cells. This chain is Autotransporter heptosyltransferase Aah, found in Escherichia coli.